A 587-amino-acid chain; its full sequence is MANRLLIYGLILWVSIIGSFALDRNKTAQNAKIGLHDTTVITTGSTTNVQKEHSSPLSTGSLRTHDFRQASKVDIRQADIRENGERKEQDALTQPATPRNPGDSSNSFLSFDEWKKVKSKEHSSGPERHLSRVREPVDPSCYKEKECIGEELEIDLGFLTNKNEWSEREENQKGFNEEKDIEKVYKKKFNYASLDCAATIVKSNPEAIGATSTLIESKDKYLLNPCSAPQQFIVIELCEDILVEEIEIANYEFFSSTFKRFRVSVSDRIPMVKNEWTILGEFEARNSRELQKFQIHNPQIWASYLKIEILSHYEDEFYCPISLIKVYGKSMMDEFKIDQLKAQEDKEQSIGTNNINNLNEQNIQDRCNNIETRLETPNTSNLSDLAGALSCTSKLIPLKFDEFFKVLNASFCPSKQMISSSSSSAVPVIPEESIFKNIMKRLSQLETNSSLTVSYIEEQSKLLSKSFEQLEMAHEAKFSHLVTIFNETMMSNLDLLNNFANQLKDQSLRILEEQKLENDKFTNRHLLHLERLEKEVSFQRRIVYASFFAFVGLISYLLITRELYFEDFEESKNGAIEKADIVQQAIR.

A signal peptide spans 1 to 21 (MANRLLIYGLILWVSIIGSFA). The Lumenal portion of the chain corresponds to 22–541 (LDRNKTAQNA…LEKEVSFQRR (520 aa)). N25 carries N-linked (GlcNAc...) asparagine glycosylation. Residues 44-108 (GSTTNVQKEH…RNPGDSSNSF (65 aa)) form a disordered region. A compositionally biased stretch (basic and acidic residues) spans 63–90 (RTHDFRQASKVDIRQADIRENGERKEQD). Polar residues predominate over residues 91–108 (ALTQPATPRNPGDSSNSF). Positions 163 to 331 (NEWSEREENQ…SLIKVYGKSM (169 aa)) constitute an SUN domain. 5 N-linked (GlcNAc...) asparagine glycosylation sites follow: N378, N381, N408, N448, and N486. Residues 542–562 (IVYASFFAFVGLISYLLITRE) form a helical membrane-spanning segment. The Cytoplasmic segment spans residues 563-587 (LYFEDFEESKNGAIEKADIVQQAIR).

It belongs to the SLP1 family. Interacts with EMP65.

It is found in the endoplasmic reticulum membrane. May be involved in membrane protein folding. Required for localization of MPS3 to the nuclear envelope. This is an uncharacterized protein from Saccharomyces cerevisiae (strain ATCC 204508 / S288c) (Baker's yeast).